The primary structure comprises 93 residues: Small ribosomal subunit protein uS19 (93 aa).

It belongs to the universal ribosomal protein uS19 family.

In terms of biological role, protein S19 forms a complex with S13 that binds strongly to the 16S ribosomal RNA. This is Small ribosomal subunit protein uS19 from Frankia alni (strain DSM 45986 / CECT 9034 / ACN14a).